The chain runs to 293 residues: Probable xyloglucan endotransglucosylase/hydrolase protein B (293 aa).

An N-terminal signal peptide occupies residues 1–21; it reads MASSLLILCLVLVSLASSALC. The GH16 domain occupies 23–220; it reads APRRPVDVPF…WSKAPFVAEY (198 aa). Residue E106 is the Nucleophile of the active site. E110 (proton donor) is an active-site residue. E110 is a xyloglucan binding site. An N-linked (GlcNAc...) asparagine glycan is attached at N114. Xyloglucan is bound by residues 123–125, 133–135, 199–200, and G204; these read QTN, DRE, and DW. 2 disulfide bridges follow: C228-C237 and C274-C287. R279 lines the xyloglucan pocket.

Belongs to the glycosyl hydrolase 16 family. XTH group 1 subfamily. Contains at least one intrachain disulfide bond essential for its enzymatic activity. Predominantly expressed in the phloem fibers of growing internodes. Weakly or not expressed in the xylem. In the internode, it is expressed closer to the bottom of the internode compared to XTHA.

The protein localises to the secreted. It localises to the cell wall. It is found in the extracellular space. Its subcellular location is the apoplast. It carries out the reaction breaks a beta-(1-&gt;4) bond in the backbone of a xyloglucan and transfers the xyloglucanyl segment on to O-4 of the non-reducing terminal glucose residue of an acceptor, which can be a xyloglucan or an oligosaccharide of xyloglucan.. Catalyzes xyloglucan endohydrolysis (XEH) and/or endotransglycosylation (XET). Cleaves and religates xyloglucan polymers, an essential constituent of the primary cell wall, and thereby participates in cell wall construction of growing tissues. This is Probable xyloglucan endotransglucosylase/hydrolase protein B (XTHB) from Phaseolus angularis (Azuki bean).